Reading from the N-terminus, the 65-residue chain is Toxin KTx8 (65 aa).

The first 25 residues, 1–25 (MNKVCFVVVLVLFVALAAYVSPIEG), serve as a signal peptide directing secretion. Cystine bridges form between C31–C53, C38–C61, and C42–C63.

Belongs to the short scorpion toxin superfamily. Potassium channel inhibitor family. Alpha-KTx 11 subfamily. As to expression, expressed by the venom gland.

Its subcellular location is the secreted. Functionally, this recombinant toxin inhibits the mammalian voltage-gated potassium channels Kv1.3/KCNA3 in vitro with an IC(50) of 26.40 nM. The sequence is that of Toxin KTx8 from Lychas mucronatus (Chinese swimming scorpion).